Consider the following 477-residue polypeptide: Probable ribonuclease FAU-1 (477 aa).

Belongs to the FAU-1 family.

Functionally, probable RNase involved in rRNA stability through maturation and/or degradation of precursor rRNAs. Binds to RNA in loop regions with AU-rich sequences. In Staphylothermus marinus (strain ATCC 43588 / DSM 3639 / JCM 9404 / F1), this protein is Probable ribonuclease FAU-1.